The following is a 257-amino-acid chain: Ubiquinone biosynthesis O-methyltransferase (257 aa).

Residues Arg-43, Gly-77, Asp-98, and Met-144 each coordinate S-adenosyl-L-methionine.

The protein belongs to the methyltransferase superfamily. UbiG/COQ3 family.

The enzyme catalyses a 3-demethylubiquinol + S-adenosyl-L-methionine = a ubiquinol + S-adenosyl-L-homocysteine + H(+). It carries out the reaction a 3-(all-trans-polyprenyl)benzene-1,2-diol + S-adenosyl-L-methionine = a 2-methoxy-6-(all-trans-polyprenyl)phenol + S-adenosyl-L-homocysteine + H(+). Its pathway is cofactor biosynthesis; ubiquinone biosynthesis. In terms of biological role, O-methyltransferase that catalyzes the 2 O-methylation steps in the ubiquinone biosynthetic pathway. This is Ubiquinone biosynthesis O-methyltransferase from Psychrobacter arcticus (strain DSM 17307 / VKM B-2377 / 273-4).